Reading from the N-terminus, the 892-residue chain is Alanine--tRNA ligase (892 aa).

Zn(2+)-binding residues include His596, His600, Cys700, and His704.

It belongs to the class-II aminoacyl-tRNA synthetase family. Zn(2+) is required as a cofactor.

The protein resides in the cytoplasm. The enzyme catalyses tRNA(Ala) + L-alanine + ATP = L-alanyl-tRNA(Ala) + AMP + diphosphate. Its function is as follows. Catalyzes the attachment of alanine to tRNA(Ala) in a two-step reaction: alanine is first activated by ATP to form Ala-AMP and then transferred to the acceptor end of tRNA(Ala). Also edits incorrectly charged Ser-tRNA(Ala) and Gly-tRNA(Ala) via its editing domain. In Methanococcus vannielii (strain ATCC 35089 / DSM 1224 / JCM 13029 / OCM 148 / SB), this protein is Alanine--tRNA ligase.